The sequence spans 329 residues: Phenylalanine--tRNA ligase alpha subunit (329 aa).

Position 254 (E254) interacts with Mg(2+).

This sequence belongs to the class-II aminoacyl-tRNA synthetase family. Phe-tRNA synthetase alpha subunit type 1 subfamily. Tetramer of two alpha and two beta subunits. Requires Mg(2+) as cofactor.

Its subcellular location is the cytoplasm. The catalysed reaction is tRNA(Phe) + L-phenylalanine + ATP = L-phenylalanyl-tRNA(Phe) + AMP + diphosphate + H(+). The protein is Phenylalanine--tRNA ligase alpha subunit of Histophilus somni (strain 2336) (Haemophilus somnus).